The sequence spans 180 residues: Large ribosomal subunit protein uL18m (180 aa).

Belongs to the universal ribosomal protein uL18 family. As to quaternary structure, component of the mitochondrial ribosome large subunit (39S) which comprises a 16S rRNA and about 50 distinct proteins.

The protein localises to the mitochondrion. Functionally, together with thiosulfate sulfurtransferase (TST), acts as a mitochondrial import factor for the cytosolic 5S rRNA. The precursor form shows RNA chaperone activity; is able to fold the 5S rRNA into an import-competent conformation that is recognized by rhodanese (TST). Both the cytoplasmic and mitochondrial forms are able to bind to the helix IV-loop D in the gamma domain of the 5S rRNA. This Mus musculus (Mouse) protein is Large ribosomal subunit protein uL18m (Mrpl18).